The primary structure comprises 232 residues: Flagellar L-ring protein (232 aa).

Positions 1 to 21 (MQKYALHAYPVMALMVATLTG) are cleaved as a signal peptide. The N-palmitoyl cysteine moiety is linked to residue Cys22. A lipid anchor (S-diacylglycerol cysteine) is attached at Cys22.

The protein belongs to the FlgH family. As to quaternary structure, the basal body constitutes a major portion of the flagellar organelle and consists of four rings (L,P,S, and M) mounted on a central rod.

The protein resides in the cell outer membrane. It is found in the bacterial flagellum basal body. Assembles around the rod to form the L-ring and probably protects the motor/basal body from shearing forces during rotation. This is Flagellar L-ring protein from Salmonella choleraesuis (strain SC-B67).